A 439-amino-acid chain; its full sequence is MGKPIVAIVGRPNVGKSTLFNKLAGKRIAIVQDTPGVTRDRIYAEAEWLNYKFTMIDTGGIEPKSEDIIVSQMRRQAQIAIEMANVIIFLVDGKEGLAPADEEVAQMLRKSKKPVVLVVNKIDKLKDENNAYEFYNLGIGDPVTISSSQALGLGDMLDRVVEYFKDDESDGEDDERINIAFIGKPNVGKSSLINKLLGEERLIVSDIPGTTRDSIDSYVDTEFGEFTLIDTAGLRRKSKVKEEIERYSVIRTYASIERADVCILMIDATEGISEQDQKIIGYAHDINKAILVIVNKWDLVEKDDKTMDKFKKELKVNLSFMPYAKYLFISAKTGQRVVKVLQTAKECYDNYTKRVKTGVLNDVISQAIMMKEPPIVGTKRLKIYYVTQIGTKPPTFIFFVNDPACIHFSYQRYLENQLRENFDFQGTGIKLEFRERKEK.

EngA-type G domains follow at residues 4 to 168 (PIVA…KDDE) and 177 to 352 (INIA…DNYT). Residues 10-17 (GRPNVGKS), 57-61 (DTGGI), 120-123 (NKID), 183-190 (GKPNVGKS), 230-234 (DTAGL), and 295-298 (NKWD) each bind GTP. The 85-residue stretch at 353 to 437 (KRVKTGVLND…GIKLEFRERK (85 aa)) folds into the KH-like domain.

This sequence belongs to the TRAFAC class TrmE-Era-EngA-EngB-Septin-like GTPase superfamily. EngA (Der) GTPase family. In terms of assembly, associates with the 50S ribosomal subunit.

In terms of biological role, GTPase that plays an essential role in the late steps of ribosome biogenesis. This is GTPase Der from Clostridium botulinum (strain Kyoto / Type A2).